Consider the following 1144-residue polypeptide: Formin-like protein 18 (1144 aa).

Residues 17–193 form the Phosphatase tensin-type domain; that stretch reads LEISERVYVF…QYISRRNVGS (177 aa). The Phosphocysteine intermediate role is filled by Cys126. In terms of domain architecture, C2 tensin-type spans 199–338; the sequence is DQALTLDCVN…FSAEVIFSEM (140 aa). 2 disordered regions span residues 429-463 and 482-729; these read ISEN…SILK and KIFS…KGRG. Over residues 441-450 the composition is skewed to basic and acidic residues; that stretch reads SPEKEKDTMS. The segment covering 491–522 has biased composition (polar residues); it reads SPVTSPLPNRSPTQGSPASISRFHSSPSSLGI. Basic and acidic residues predominate over residues 526–536; that stretch reads LHDHGSCKDEE. Over residues 538 to 548 the composition is skewed to low complexity; that stretch reads TSSSPASPSIS. Residues 555–580 show a composition bias toward polar residues; sequence PLTSSQPKKASPQCPQSPTPVHSNGP. Over residues 603 to 613 the composition is skewed to pro residues; that stretch reads RPPPPPPPPPI. A compositionally biased stretch (low complexity) spans 614 to 629; that stretch reads SSLRSTPSPSSTSNSI. A compositionally biased stretch (pro residues) spans 633-643; the sequence is GPPPPPPPPPL. Residues 644–653 show a composition bias toward low complexity; the sequence is QSHRSALSSS. Over residues 669 to 678 the composition is skewed to pro residues; sequence NPPPPPPPPL. A compositionally biased stretch (low complexity) spans 679 to 695; that stretch reads HSNSRMGAPTSSLVLKS. The segment covering 696–705 has biased composition (pro residues); that stretch reads PPVPPPPAPA. The FH2 domain maps to 735–1135; the sequence is KGQGQTRKAN…RAQKEAENEK (401 aa).

This sequence belongs to the formin-like family. Class-II subfamily.

The polypeptide is Formin-like protein 18 (FH18) (Arabidopsis thaliana (Mouse-ear cress)).